A 440-amino-acid polypeptide reads, in one-letter code: Ribosomal protein uS12 methylthiotransferase RimO (440 aa).

An MTTase N-terminal domain is found at 6–116 (PKVGFVSLGC…VVTAVHEVVP (111 aa)). 6 residues coordinate [4Fe-4S] cluster: cysteine 15, cysteine 51, cysteine 80, cysteine 149, cysteine 153, and cysteine 156. The Radical SAM core domain occupies 135–373 (LTPRHYAYLK…MAHQQAISAA (239 aa)). The region spanning 376–440 (QLKVGKEIEV…DEYDLWAEPV (65 aa)) is the TRAM domain.

This sequence belongs to the methylthiotransferase family. RimO subfamily. Requires [4Fe-4S] cluster as cofactor.

It localises to the cytoplasm. The enzyme catalyses L-aspartate(89)-[ribosomal protein uS12]-hydrogen + (sulfur carrier)-SH + AH2 + 2 S-adenosyl-L-methionine = 3-methylsulfanyl-L-aspartate(89)-[ribosomal protein uS12]-hydrogen + (sulfur carrier)-H + 5'-deoxyadenosine + L-methionine + A + S-adenosyl-L-homocysteine + 2 H(+). In terms of biological role, catalyzes the methylthiolation of an aspartic acid residue of ribosomal protein uS12. The protein is Ribosomal protein uS12 methylthiotransferase RimO of Pseudomonas paraeruginosa (strain DSM 24068 / PA7) (Pseudomonas aeruginosa (strain PA7)).